We begin with the raw amino-acid sequence, 699 residues long: Integrator complex subunit 10 (699 aa).

Serine 220 and serine 370 each carry phosphoserine. Lysine 453 participates in a covalent cross-link: Glycyl lysine isopeptide (Lys-Gly) (interchain with G-Cter in SUMO2).

The protein belongs to the Integrator subunit 10 family. As to quaternary structure, component of the Integrator complex, composed of core subunits INTS1, INTS2, INTS3, INTS4, INTS5, INTS6, INTS7, INTS8, INTS9/RC74, INTS10, INTS11/CPSF3L, INTS12, INTS13, INTS14 and INTS15. The core complex associates with protein phosphatase 2A subunits PPP2CA and PPP2R1A, to form the Integrator-PP2A (INTAC) complex. INTS10 is part of the tail subcomplex, composed of INTS10, INTS13, INTS14 and INTS15.

It localises to the nucleus. In terms of biological role, component of the integrator complex, a multiprotein complex that terminates RNA polymerase II (Pol II) transcription in the promoter-proximal region of genes. The integrator complex provides a quality checkpoint during transcription elongation by driving premature transcription termination of transcripts that are unfavorably configured for transcriptional elongation: the complex terminates transcription by (1) catalyzing dephosphorylation of the C-terminal domain (CTD) of Pol II subunit POLR2A/RPB1 and SUPT5H/SPT5, (2) degrading the exiting nascent RNA transcript via endonuclease activity and (3) promoting the release of Pol II from bound DNA. The integrator complex is also involved in terminating the synthesis of non-coding Pol II transcripts, such as enhancer RNAs (eRNAs), small nuclear RNAs (snRNAs), telomerase RNAs and long non-coding RNAs (lncRNAs). Within the integrator complex, INTS10 is part of the integrator tail module that acts as a platform for the recruitment of transcription factors at promoters. May be not involved in the recruitment of cytoplasmic dynein to the nuclear envelope, probably as component of the integrator complex. The chain is Integrator complex subunit 10 (INTS10) from Macaca fascicularis (Crab-eating macaque).